We begin with the raw amino-acid sequence, 722 residues long: Nucleolar protein 10 (722 aa).

WD repeat units lie at residues 50-90 (EMPT…LKFE), 174-213 (TDAAEMNVCDINPVHQLFAAGTLEGRVDCWDPRVRTRVAA), 228-266 (EGLPSVSALKFNDSLGLAVGTSTGQILVYDLRSSRPLLV), 270-308 (YYGLPIKSLHFHNSLDLVLSADSKIIKMWNKDNGKVFSS), and 310-349 (EPQANINDVCLYPASGMLFTANEDPKMNTFYIPALGPAPR). Coiled-coil stretches lie at residues 423 to 476 (EYRK…ANVA) and 511 to 534 (SNVAERRRKSLLEEEQEQAEEEQE). 4 disordered regions span residues 521–555 (LLEEEQEQAEEEQEPEGRGSSEDDSSDEDDKGWVQ), 572–607 (SYIQRQERRQQDRNTRLQSSDTHTQQSHGAQKPRFY), 616–635 (RSFSDVSRKQKTHKASLEER), and 664–722 (TEKQ…RRPF). The segment covering 523–534 (EEEQEQAEEEQE) has biased composition (acidic residues). The span at 572–586 (SYIQRQERRQQDRNT) shows a compositional bias: basic and acidic residues. Positions 587–600 (RLQSSDTHTQQSHG) are enriched in polar residues. Residues 620–681 (DVSRKQKTHK…QAERDHHEER (62 aa)) are a coiled coil. The segment covering 664–682 (TEKQRFQQQAERDHHEERR) has biased composition (basic and acidic residues). Basic residues-rich tracts occupy residues 683–693 (RIRRSAGHLHS) and 702–722 (GGGRGRGGGRGRGGGRGRRPF).

Belongs to the WD repeat NOL10/ENP2 family.

It localises to the nucleus. The protein resides in the nucleolus. In Danio rerio (Zebrafish), this protein is Nucleolar protein 10 (nol10).